Here is a 64-residue protein sequence, read N- to C-terminus: VRDAYIAKPHNCVYECARNEYCNNLCTKNGAKSGYCQWSGKYGNGCWCIELPDNVPIRVPGKCH.

Residues 2–64 (RDAYIAKPHN…VPIRVPGKCH (63 aa)) form the LCN-type CS-alpha/beta domain. Intrachain disulfides connect Cys12–Cys63, Cys16–Cys36, Cys22–Cys46, and Cys26–Cys48.

It belongs to the long (4 C-C) scorpion toxin superfamily. Sodium channel inhibitor family. Alpha subfamily. In terms of tissue distribution, expressed by the venom gland.

The protein resides in the secreted. Functionally, alpha toxins bind voltage-independently at site-3 of sodium channels (Nav) and inhibit the inactivation of the activated channels, thereby blocking neuronal transmission. This toxin is active against both mammals and insects, and is classified as an alpha-like toxin. This Olivierus martensii (Manchurian scorpion) protein is Alpha-like toxin BmK M2.